The sequence spans 325 residues: UPF0285 protein MmarC7_1666 (325 aa).

This sequence belongs to the UPF0285 family.

In Methanococcus maripaludis (strain C7 / ATCC BAA-1331), this protein is UPF0285 protein MmarC7_1666.